Here is a 469-residue protein sequence, read N- to C-terminus: MNPNQKIITIGVVNTTLSTIALLIGVGNLIFNTVIHEKIGDHQTVVYPTITAPVVPNCSDTIITYNNTVINNITTTIITEAERHFKPSLPLCPFRGFFPFHKDNAIRLGENKDVIVTREPYVSCDNDNCWSFALAQGALLGTKHSNGTIKDRTPYRSLIRFPIGTAPVLGNYKEICVAWSSSSCFDGKEWMHVCMTGNDNDASAQIIYAGKMTDSIKSWRRDILRTQESECQCIDGTCVVAVTDGPAANSADHRVYWIREGKVIKYENVPKTKIQHLEECSCYVDTDVYCVCRDNWKGSNRPWMRINNETILETGYVCSKFHSDTPRPADPSTVSCDSPSNVNGGPGVKGFGFKTGDDVWLGRTVSTNGRSGFEIIKVTEGWINSPNHAKSVTQTLVSNNDWSGYSGSFIVENNGCFQPCFYIELIRGRTNKNDDVSWTSNSIVTFCGLDNEPGSGNWPDGSNIGFMPK.

At 1 to 6 (MNPNQK) the chain is on the intravirion side. A helical membrane pass occupies residues 7–29 (IITIGVVNTTLSTIALLIGVGNL). The tract at residues 11–33 (GVVNTTLSTIALLIGVGNLIFNT) is involved in apical transport and lipid raft association. The Virion surface segment spans residues 30–469 (IFNTVIHEKI…DGSNIGFMPK (440 aa)). Residues 36–88 (HEKIGDHQTVVYPTITAPVVPNCSDTIITYNNTVINNITTTIITEAERHFKPS) form a hypervariable stalk region region. Residues asparagine 57, asparagine 66, and asparagine 72 are each glycosylated (N-linked (GlcNAc...) asparagine; by host). The segment at 91 to 469 (LCPFRGFFPF…DGSNIGFMPK (379 aa)) is head of neuraminidase. 8 disulfides stabilise this stretch: cysteine 92-cysteine 416, cysteine 124-cysteine 129, cysteine 184-cysteine 231, cysteine 233-cysteine 238, cysteine 280-cysteine 292, cysteine 282-cysteine 290, cysteine 318-cysteine 336, and cysteine 420-cysteine 447. Residue arginine 118 coordinates substrate. Asparagine 146 carries N-linked (GlcNAc...) asparagine; by host glycosylation. Aspartate 151 serves as the catalytic Proton donor/acceptor. Arginine 152 contacts substrate. A substrate-binding site is contributed by 278–279 (EE). Residue arginine 293 coordinates substrate. 2 residues coordinate Ca(2+): aspartate 294 and glycine 298. A glycan (N-linked (GlcNAc...) asparagine; by host) is linked at asparagine 308. Aspartate 324 lines the Ca(2+) pocket. Residue arginine 370 participates in substrate binding. Tyrosine 405 acts as the Nucleophile in catalysis.

It belongs to the glycosyl hydrolase 34 family. Homotetramer. The cofactor is Ca(2+). Post-translationally, N-glycosylated.

The protein localises to the virion membrane. The protein resides in the host apical cell membrane. The enzyme catalyses Hydrolysis of alpha-(2-&gt;3)-, alpha-(2-&gt;6)-, alpha-(2-&gt;8)- glycosidic linkages of terminal sialic acid residues in oligosaccharides, glycoproteins, glycolipids, colominic acid and synthetic substrates.. With respect to regulation, inhibited by the neuraminidase inhibitors zanamivir (Relenza) and oseltamivir (Tamiflu). These drugs interfere with the release of progeny virus from infected cells and are effective against all influenza strains. Resistance to neuraminidase inhibitors is quite rare. Catalyzes the removal of terminal sialic acid residues from viral and cellular glycoconjugates. Cleaves off the terminal sialic acids on the glycosylated HA during virus budding to facilitate virus release. Additionally helps virus spread through the circulation by further removing sialic acids from the cell surface. These cleavages prevent self-aggregation and ensure the efficient spread of the progeny virus from cell to cell. Otherwise, infection would be limited to one round of replication. Described as a receptor-destroying enzyme because it cleaves a terminal sialic acid from the cellular receptors. May facilitate viral invasion of the upper airways by cleaving the sialic acid moieties on the mucin of the airway epithelial cells. Likely to plays a role in the budding process through its association with lipid rafts during intracellular transport. May additionally display a raft-association independent effect on budding. Plays a role in the determination of host range restriction on replication and virulence. Sialidase activity in late endosome/lysosome traffic seems to enhance virus replication. The polypeptide is Neuraminidase (Aves).